The chain runs to 200 residues: Probable GTP-binding protein EngB (200 aa).

The region spanning 24–199 (EGAEVAFAGR…RGVIGGWLGL (176 aa)) is the EngB-type G domain. GTP-binding positions include 32-39 (GRSNAGKS), 59-63 (GRTQQ), 77-80 (DLPG), 144-147 (TKAD), and 178-180 (FSG). Positions 39 and 61 each coordinate Mg(2+).

It belongs to the TRAFAC class TrmE-Era-EngA-EngB-Septin-like GTPase superfamily. EngB GTPase family. Mg(2+) is required as a cofactor.

Necessary for normal cell division and for the maintenance of normal septation. The chain is Probable GTP-binding protein EngB from Stenotrophomonas maltophilia (strain K279a).